Reading from the N-terminus, the 301-residue chain is Transmembrane protein 178A (301 aa).

The N-terminal stretch at 1-25 (MEKRALVTAISLSMSLLALMLLVTA) is a signal peptide. Over 26–183 (IFTDHWYETD…LLHLRRITAG (158 aa)) the chain is Extracellular. Asparagine 162 carries an N-linked (GlcNAc...) asparagine glycan. A helical transmembrane segment spans residues 184–204 (FLGMAAAVMLCGSIVAAVGFF). Over 205-215 (WEESLTQHVSG) the chain is Cytoplasmic. A helical transmembrane segment spans residues 216–236 (LLFLMAGIFCTISLCTYAASV). Residues 237–258 (SYDLSRNPPFIYGLPSDVDHGY) are Extracellular-facing. A helical membrane pass occupies residues 259–279 (GWSIFCAWVSLGLTVASGCIC). Over 280 to 301 (TTYPFLSRTKALRSKTARESSV) the chain is Cytoplasmic.

This sequence belongs to the TMEM178 family.

It is found in the endoplasmic reticulum membrane. Its function is as follows. May act as a negative regulator of osteoclast differentiation. This is Transmembrane protein 178A (tmem178a) from Danio rerio (Zebrafish).